We begin with the raw amino-acid sequence, 794 residues long: MGGQMQQNNAAAATALYDGALPTNDAGDAVMARWLQSAGLQHLASPVASTGNDQRHLPNLLMQGYGAQTAEEKQRLFQLMRNLNFNGESTSESYTPTAHTSAAMPSSEGFFSPEFRGDFGAGLLDLHAMDDTELLSEHVITEPFEPSPFMPSVNKEFEEDYNLAANRQQRQQTEAEPLGLLPKSDKENNSVAKIKVVVRKRPLNKKETAKKEEDVVTVSDNSLTVHEPRVKVDLTAYVEKHEFCFDAVLDEDVSNDEVYRATIEPIIPIIFQRTKATCFAYGQTGSGKTFTMKPLPIRAVEDLMRLLRQPVYSNQRFKLWLSYFEIYGGKLFDLLSERKKLCMREDGRQQVCIVGLQEYEVSDVQIVKDFIEKGNAERSTGSTGANEESSRSHAILQLVVKKHVEVKDTRRRNNDSNELPGKVVGKISFIDLAGSERGADTTDNDRQTRIEGAEINKSLLALKECIRALDNDQLHIPFRGSKLTEVLRDSFVGNSRTVMISCISPNAGSCEHTLNTLRYADRVKSLSKSGNSKKDQTANSMPPVNKDPLLGPNDVEDVFEPPQEVNVPETRRRVVEKDSNSSTSGIDFRQPTNYREESGIPSFSMDKGRSEPNSSFAGSTSQRNNISSYPQETSDREEKVKKVSPPRGKGLREEKPDRPQNWSKRDVSSSDIPTLTNFRQNASETASRQYETASRQYETDPSLDENLDALLEEEEALIAAHRKEIEDTMEIVREEMKLLAEVDQPGSMIENYVTQLSFVLSRKAAGLVSLQARLARFQHRLKEQEILSRKRVPR.

The Kinesin motor domain occupies K193–L526. G282 to T289 provides a ligand contact to ATP. A disordered region spans residues S525–T699. Positions E569–S579 are enriched in basic and acidic residues. 2 stretches are compositionally biased toward polar residues: residues N580–N593 and E611–E632. Residues G650–S668 are compositionally biased toward basic and acidic residues. Residues S669–Q696 are compositionally biased toward polar residues. Residues E705–V742 are a coiled coil.

It belongs to the TRAFAC class myosin-kinesin ATPase superfamily. Kinesin family. KIN-13 subfamily. As to quaternary structure, component of the active ARAC10-IRC5-KIN13A complex. Interacts (via-C-terminus) with ICR2 and ICR5 (via N-terminus). No interactions with ICR1. As to expression, expressed in leaves, roots, young and mature seedlings. Preferentially expressed in the secondary cell wall pits of differentiating metaxylem vessel cells (at the protein level).

The protein resides in the golgi apparatus. The protein localises to the golgi stack. It localises to the cytoplasm. Its subcellular location is the cytoskeleton. In terms of biological role, internal motor kinesin involved in trichome morphogenesis. Participates in regulating the formation of Golgi-associated vesicles. Plays a central role in microtubule disassembly via the active ARAC10-ICR5 cascade, which establishes the secondary cell wall pattern in metaxylem vessel cells. Acts redundantly with KIN13B to modulate cell wall synthesis and cell expansion via the THE1 pathway. The chain is Kinesin-like protein KIN-13A from Arabidopsis thaliana (Mouse-ear cress).